A 415-amino-acid chain; its full sequence is Gamma-glutamyl phosphate reductase (415 aa).

Belongs to the gamma-glutamyl phosphate reductase family.

It localises to the cytoplasm. The catalysed reaction is L-glutamate 5-semialdehyde + phosphate + NADP(+) = L-glutamyl 5-phosphate + NADPH + H(+). The protein operates within amino-acid biosynthesis; L-proline biosynthesis; L-glutamate 5-semialdehyde from L-glutamate: step 2/2. Functionally, catalyzes the NADPH-dependent reduction of L-glutamate 5-phosphate into L-glutamate 5-semialdehyde and phosphate. The product spontaneously undergoes cyclization to form 1-pyrroline-5-carboxylate. The sequence is that of Gamma-glutamyl phosphate reductase from Listeria monocytogenes serotype 4a (strain HCC23).